The primary structure comprises 151 residues: Ocs element-binding factor 1 (151 aa).

A compositionally biased stretch (polar residues) spans 1 to 17 (MSSSSLSPTAGRTSGSD). Residues 1-47 (MSSSSLSPTAGRTSGSDGDSAADTHRREKRRLSNRESARRSRLRKQQ) form a disordered region. Over residues 22-39 (ADTHRREKRRLSNRESAR) the composition is skewed to basic and acidic residues. Positions 24-87 (THRREKRRLS…TRVEQENTVL (64 aa)) constitute a bZIP domain. The interval 26–45 (RREKRRLSNRESARRSRLRK) is basic motif. Residues 52 to 59 (LVQEVARL) are leucine-zipper.

It belongs to the bZIP family. Roots and shoots of young plants, and basal portion of leaves.

The protein resides in the nucleus. Functionally, may contribute to developmentally specific patterns of gene expression. Binds specifically to ocs elements which are transcriptional enhancer found in the promoters of several plant genes. OCSBF-1 is able to bind to a site within each half of the ocs element as well as to animal AP-1 and CREB sites. The protein is Ocs element-binding factor 1 (OBF1) of Zea mays (Maize).